Consider the following 273-residue polypeptide: Outer capsid protein VP7 (273 aa).

This sequence belongs to the aquareoviridae outer capsid VP7 protein family. In terms of assembly, interacts with VP4 and VP6.

The protein resides in the virion. Its function is as follows. Interacts with VP4 to form the outer icosahedral capsid with an incomplete T=13 symmetry, about 80 nm in diameter, and consisting of 200 VP4-VP7 trimers. In Ctenopharyngodon idella (Grass carp), this protein is Outer capsid protein VP7 (S10).